The primary structure comprises 400 residues: Forkhead box protein A4-B (400 aa).

Residues 119–213 constitute a DNA-binding region (fork-head); that stretch reads KPPYSYISLI…ENGCYLRRQK (95 aa). The span at 218-234 shows a compositional bias: basic and acidic residues; it reads ERSKSGEGERKGNKPGD. The segment at 218–290 is disordered; sequence ERSKSGEGER…VGFSPTSEQA (73 aa). 2 stretches are compositionally biased toward polar residues: residues 249–258 and 267–277; these read DCSSSRSPQA and STGSSIHQATG.

Primarily expressed in the dorsal blastopore lip (Spemann organizer) of early gastrulae. At later stages, expressed in the dorsal mesoderm and the neural floor plate. In the dorsal mesoderm, expressed in the notochord but not in the presomitic mesoderm. Also expressed in the mid-brain area.

The protein resides in the nucleus. In terms of biological role, transcriptional repressor involved in embryonic nervous system development. Plays a role in the induction and patterning of the anterior-posterior neural axis. Involved in the establishment of floor plate differentiation from neural plate cells during gastrulation. Binds the anf1 promoter sequence to restrict expression of anf1 to the anterior of the neural plate, thereby patterning the forebrain. Can bind to the HNF-3-alpha DNA target sequence. Cooperates with t/bra in a dose-dependent manner to specify dorsal mesoderm formation, including notochord. May be involved in the dorso-ventral patterning of the mesoderm. Binds to DNA via the target sequence 5'-[GA]TAAA[TC]A-3', with 5'-GTAAATA-3' being the preferred binding site. The polypeptide is Forkhead box protein A4-B (foxa4-b) (Xenopus laevis (African clawed frog)).